Consider the following 529-residue polypeptide: Beta-glucosidase 11 (529 aa).

A signal peptide spans 1 to 25; that stretch reads MAVAGAMVMSGALLLLHLLAFTCVA. A beta-D-glucoside contacts are provided by residues Gln-54, His-157, and 202-203; that span reads NE. The Proton donor role is filled by Glu-203. A disulfide bond links Cys-222 and Cys-230. Tyr-346 is a binding site for a beta-D-glucoside. Asn-361 carries an N-linked (GlcNAc...) asparagine glycan. Position 417 (Glu-417) interacts with a beta-D-glucoside. Glu-417 functions as the Nucleophile in the catalytic mechanism. A glycan (N-linked (GlcNAc...) asparagine) is linked at Asn-425. Residues Trp-466, 473-474, and Phe-482 each bind a beta-D-glucoside; that span reads EW.

This sequence belongs to the glycosyl hydrolase 1 family.

The catalysed reaction is Hydrolysis of terminal, non-reducing beta-D-glucosyl residues with release of beta-D-glucose.. This Oryza sativa subsp. japonica (Rice) protein is Beta-glucosidase 11 (BGLU11).